The chain runs to 341 residues: Uroporphyrinogen decarboxylase (341 aa).

Substrate-binding positions include 23–27 (RQAGR), aspartate 73, tyrosine 148, serine 203, and histidine 318.

The protein belongs to the uroporphyrinogen decarboxylase family. In terms of assembly, homodimer.

It localises to the cytoplasm. The enzyme catalyses uroporphyrinogen III + 4 H(+) = coproporphyrinogen III + 4 CO2. It participates in porphyrin-containing compound metabolism; protoporphyrin-IX biosynthesis; coproporphyrinogen-III from 5-aminolevulinate: step 4/4. Functionally, catalyzes the decarboxylation of four acetate groups of uroporphyrinogen-III to yield coproporphyrinogen-III. This is Uroporphyrinogen decarboxylase from Brucella ovis (strain ATCC 25840 / 63/290 / NCTC 10512).